Here is a 156-residue protein sequence, read N- to C-terminus: Transcriptional repressor NrdR (156 aa).

A zinc finger lies at 3 to 34 (CPFCQHDDTQVLDTRISEEGDSIRRRRRCVSC). Positions 49 to 139 (PVIVKKNGSR…VYKSFEDVAE (91 aa)) constitute an ATP-cone domain.

Belongs to the NrdR family. It depends on Zn(2+) as a cofactor.

Negatively regulates transcription of bacterial ribonucleotide reductase nrd genes and operons by binding to NrdR-boxes. This is Transcriptional repressor NrdR from Herminiimonas arsenicoxydans.